The sequence spans 1407 residues: DNA-directed RNA polymerase subunit beta' (1407 aa).

4 residues coordinate Zn(2+): cysteine 70, cysteine 72, cysteine 85, and cysteine 88. Aspartate 460, aspartate 462, and aspartate 464 together coordinate Mg(2+). Zn(2+)-binding residues include cysteine 814, cysteine 888, cysteine 895, and cysteine 898.

It belongs to the RNA polymerase beta' chain family. The RNAP catalytic core consists of 2 alpha, 1 beta, 1 beta' and 1 omega subunit. When a sigma factor is associated with the core the holoenzyme is formed, which can initiate transcription. The cofactor is Mg(2+). Zn(2+) is required as a cofactor.

The enzyme catalyses RNA(n) + a ribonucleoside 5'-triphosphate = RNA(n+1) + diphosphate. In terms of biological role, DNA-dependent RNA polymerase catalyzes the transcription of DNA into RNA using the four ribonucleoside triphosphates as substrates. This is DNA-directed RNA polymerase subunit beta' from Erwinia tasmaniensis (strain DSM 17950 / CFBP 7177 / CIP 109463 / NCPPB 4357 / Et1/99).